Consider the following 370-residue polypeptide: Peptidyl-prolyl cis-trans isomerase D (370 aa).

Ser-5 bears the Phosphoserine mark. A PPIase cyclophilin-type domain is found at 19–183 (FFDVDIGGER…KLCVIAECGE (165 aa)). N6-acetyllysine is present on Lys-171. Positions 185–215 (KEGDEWGIFPKDGSGDSHPDFPEDADIDLKD) are chaperone activity. Ser-198 is subject to Phosphoserine. The segment at 214 to 370 (KDVDKILLIS…EKAVYAKMFA (157 aa)) is interaction with HSP90AB1. 3 TPR repeats span residues 223 to 256 (SEDL…LDSS), 273 to 306 (LSCV…DPSN), and 308 to 340 (KALY…APGD).

The protein belongs to the cyclophilin-type PPIase family. PPIase D subfamily. As to quaternary structure, identified in ESR1 or NR3C1/GCR steroid receptor-chaperone complexes. Found in HSP90 chaperone complexes with kinase clients LCK or EIF2AK1. Two monomers associate with one HSP90 homodimer. Interacts with HSP90AA1. Interacts with HSP90AB1; PPID and FKBP4 compete for binding to HSP90AB1 and the interaction is mutually exclusive with the PPID:HSPA8 interaction. Interacts with HSPA8; PPID and STIP1 but not FKBP4 compete for binding to HSPA8 and the interaction is mutually exclusive with the PPID:HSP90AB1 interaction. Interacts with S100A1 and S100A2; the interactions dissociate the PPID:HSP90AA1 interaction. Interacts with S100A6. Interacts with MYB, ILF2, XRCC6, RACK1 and RPS3. Interacts with cytoplasmic dynein 1 intermediate chain (DYNC1I1 or DYNC1I2).

It is found in the cytoplasm. The protein localises to the nucleus. The protein resides in the nucleolus. Its subcellular location is the nucleoplasm. It catalyses the reaction [protein]-peptidylproline (omega=180) = [protein]-peptidylproline (omega=0). Its activity is regulated as follows. Less sensitive to inhibition by cyclosporin A than is CYP-18. PPIase that catalyzes the cis-trans isomerization of proline imidic peptide bonds in oligopeptides and may therefore assist protein folding. Proposed to act as a co-chaperone in HSP90 complexes such as in unligated steroid receptors heterocomplexes. Different co-chaperones seem to compete for association with HSP90 thus establishing distinct HSP90-co-chaperone-receptor complexes with the potential to exert tissue-specific receptor activity control. May have a preference for estrogen receptor complexes and is not found in glucocorticoid receptor complexes. May be involved in cytoplasmic dynein-dependent movement of the receptor from the cytoplasm to the nucleus. May regulate MYB by inhibiting its DNA-binding activity. Involved in regulation of AHR signaling by promoting the formation of the AHR:ARNT dimer; the function is independent of HSP90 but requires the chaperone activity region. Involved in regulation of UV radiation-induced apoptosis. The chain is Peptidyl-prolyl cis-trans isomerase D from Rattus norvegicus (Rat).